A 92-amino-acid polypeptide reads, in one-letter code: Small ribosomal subunit protein uS19c (92 aa).

Belongs to the universal ribosomal protein uS19 family.

It is found in the plastid. Its subcellular location is the chloroplast. Its function is as follows. Protein S19 forms a complex with S13 that binds strongly to the 16S ribosomal RNA. The sequence is that of Small ribosomal subunit protein uS19c from Ostreococcus tauri.